The sequence spans 133 residues: Heat shock protein 15 (133 aa).

Residues 9–71 (VRLDKWLWAA…DERTVIVKAI (63 aa)) form the S4 RNA-binding domain. The disordered stretch occupies residues 105–133 (NALTMPHPDRRPDKKERRDLLRFKHGDSE). Residues 111–133 (HPDRRPDKKERRDLLRFKHGDSE) are compositionally biased toward basic and acidic residues.

It belongs to the HSP15 family. In terms of assembly, monomer.

Functionally, involved in the recycling of free 50S ribosomal subunits that still carry a nascent chain. Binds RNA more specifically than DNA. Binds with very high affinity to the free 50S ribosomal subunit. Does not bind it when it is part of the 70S ribosome. This is Heat shock protein 15 (hslR) from Escherichia coli O157:H7.